Here is an 84-residue protein sequence, read N- to C-terminus: uncharacterized protein (84 aa).

Residues 34–54 show a composition bias toward low complexity; it reads ATSTASSSAAKNTTSSSKNAA. The tract at residues 34–57 is disordered; the sequence is ATSTASSSAAKNTTSSSKNAAPGM. N-linked (GlcNAc...) asparagine glycosylation occurs at Asn45. A helical membrane pass occupies residues 66–83; it reads YGIIMAAFAAVSFVLGTG.

Its subcellular location is the endoplasmic reticulum membrane. This is an uncharacterized protein from Saccharomyces cerevisiae (strain ATCC 204508 / S288c) (Baker's yeast).